We begin with the raw amino-acid sequence, 168 residues long: Peptide deformylase (168 aa).

2 residues coordinate Fe cation: Cys-91 and His-133. The active site involves Glu-134. Residue His-137 participates in Fe cation binding.

It belongs to the polypeptide deformylase family. It depends on Fe(2+) as a cofactor.

It catalyses the reaction N-terminal N-formyl-L-methionyl-[peptide] + H2O = N-terminal L-methionyl-[peptide] + formate. Removes the formyl group from the N-terminal Met of newly synthesized proteins. Requires at least a dipeptide for an efficient rate of reaction. N-terminal L-methionine is a prerequisite for activity but the enzyme has broad specificity at other positions. The polypeptide is Peptide deformylase (Endomicrobium trichonymphae).